The following is a 300-amino-acid chain: CDP-diacylglycerol--serine O-phosphatidyltransferase (300 aa).

6 consecutive transmembrane segments (helical) span residues 10–30 (AVNL…AGLT), 74–94 (IDSL…LYAT), 95–115 (MLST…CVVL), 135–155 (EFFV…LLAL), 162–182 (GWWT…MLLI), and 207–227 (LAIF…VIIL).

The protein belongs to the CDP-alcohol phosphatidyltransferase class-I family.

The protein localises to the cell membrane. It carries out the reaction a CDP-1,2-diacyl-sn-glycerol + L-serine = a 1,2-diacyl-sn-glycero-3-phospho-L-serine + CMP + H(+). In Mycobacterium leprae (strain TN), this protein is CDP-diacylglycerol--serine O-phosphatidyltransferase (pssA).